A 595-amino-acid chain; its full sequence is Elongation factor 4 (595 aa).

The region spanning 2 to 183 is the tr-type G domain; it reads KNIRNFCIIA…AIIERISPPT (182 aa). GTP-binding positions include 14–19 and 130–133; these read DHGKST and NKID.

This sequence belongs to the TRAFAC class translation factor GTPase superfamily. Classic translation factor GTPase family. LepA subfamily.

The protein resides in the cell inner membrane. It carries out the reaction GTP + H2O = GDP + phosphate + H(+). Required for accurate and efficient protein synthesis under certain stress conditions. May act as a fidelity factor of the translation reaction, by catalyzing a one-codon backward translocation of tRNAs on improperly translocated ribosomes. Back-translocation proceeds from a post-translocation (POST) complex to a pre-translocation (PRE) complex, thus giving elongation factor G a second chance to translocate the tRNAs correctly. Binds to ribosomes in a GTP-dependent manner. The sequence is that of Elongation factor 4 from Amoebophilus asiaticus (strain 5a2).